A 127-amino-acid chain; its full sequence is V-type proton ATPase subunit F (127 aa).

The protein belongs to the V-ATPase F subunit family. In terms of assembly, V-ATPase is a heteromultimeric enzyme made up of two complexes: the ATP-hydrolytic V1 complex and the proton translocation V0 complex. The V1 complex consists of three catalytic AB heterodimers that form a heterohexamer, three peripheral stalks each consisting of EG heterodimers, one central rotor including subunits D and F, and the regulatory subunits C and H. The proton translocation complex V0 consists of the proton transport subunit a, a ring of proteolipid subunits c9c'', rotary subunit d, subunits e and f, and the accessory subunits VhaAC45 and ATP6AP2.

In terms of biological role, subunit of the V1 complex of vacuolar(H+)-ATPase (V-ATPase), a multisubunit enzyme composed of a peripheral complex (V1) that hydrolyzes ATP and a membrane integral complex (V0) that translocates protons. V-ATPase is responsible for acidifying and maintaining the pH of intracellular compartments and in some cell types, is targeted to the plasma membrane, where it is responsible for acidifying the extracellular environment. The chain is V-type proton ATPase subunit F from Aedes aegypti (Yellowfever mosquito).